We begin with the raw amino-acid sequence, 447 residues long: Glutamyl-tRNA reductase (447 aa).

Substrate contacts are provided by residues 45-48 (TCNR), Ser111, 116-118 (ETE), and Gln122. The active-site Nucleophile is Cys46. 191 to 196 (GTGKYA) lines the NADP(+) pocket.

The protein belongs to the glutamyl-tRNA reductase family. As to quaternary structure, homodimer.

The enzyme catalyses (S)-4-amino-5-oxopentanoate + tRNA(Glu) + NADP(+) = L-glutamyl-tRNA(Glu) + NADPH + H(+). It participates in porphyrin-containing compound metabolism; protoporphyrin-IX biosynthesis; 5-aminolevulinate from L-glutamyl-tRNA(Glu): step 1/2. In terms of biological role, catalyzes the NADPH-dependent reduction of glutamyl-tRNA(Glu) to glutamate 1-semialdehyde (GSA). This is Glutamyl-tRNA reductase from Tropheryma whipplei (strain Twist) (Whipple's bacillus).